The chain runs to 450 residues: 3-phosphoshikimate 1-carboxyvinyltransferase (450 aa).

Residues Lys-28, Ser-29, and Arg-33 each coordinate 3-phosphoshikimate. Lys-28 is a binding site for phosphoenolpyruvate. 2 residues coordinate phosphoenolpyruvate: Gly-100 and Arg-128. 4 residues coordinate 3-phosphoshikimate: Ser-173, Gln-175, Asp-326, and Lys-353. Gln-175 is a phosphoenolpyruvate binding site. Asp-326 acts as the Proton acceptor in catalysis. Phosphoenolpyruvate contacts are provided by Arg-357 and Arg-402.

This sequence belongs to the EPSP synthase family. As to quaternary structure, monomer.

It is found in the cytoplasm. It carries out the reaction 3-phosphoshikimate + phosphoenolpyruvate = 5-O-(1-carboxyvinyl)-3-phosphoshikimate + phosphate. It functions in the pathway metabolic intermediate biosynthesis; chorismate biosynthesis; chorismate from D-erythrose 4-phosphate and phosphoenolpyruvate: step 6/7. Catalyzes the transfer of the enolpyruvyl moiety of phosphoenolpyruvate (PEP) to the 5-hydroxyl of shikimate-3-phosphate (S3P) to produce enolpyruvyl shikimate-3-phosphate and inorganic phosphate. The sequence is that of 3-phosphoshikimate 1-carboxyvinyltransferase from Brucella abortus (strain S19).